Reading from the N-terminus, the 179-residue chain is Interleukin-22b (179 aa).

A signal peptide spans 1–33 (MAVLQKSMSFSLMGTLAASCLLLIALWAQEANA). Disulfide bonds link C40–C132 and C89–C178. N54, N68, and N97 each carry an N-linked (GlcNAc...) asparagine glycan.

This sequence belongs to the IL-10 family.

The protein localises to the secreted. Cytokine that contributes to the inflammatory response in vivo. The chain is Interleukin-22b from Mus musculus (Mouse).